A 108-amino-acid chain; its full sequence is Mitochondrial import inner membrane translocase subunit tim-13 (108 aa).

A Twin CX3C motif motif is present at residues 45–68 (CTNKCITAPGSSLASGEKQCLQRC). Intrachain disulfides connect cysteine 45–cysteine 68 and cysteine 49–cysteine 64. Residues 89-108 (EEMASSGGMGGGFGQGPSFS) form a disordered region. Over residues 95-108 (GGMGGGFGQGPSFS) the composition is skewed to gly residues.

It belongs to the small Tim family. In terms of assembly, heterohexamer; composed of 3 copies of tim-8/ddp-1 and 3 copies of tin-13/tim-13, named soluble 70 kDa complex. Associates with the TIM22 complex, whose core is composed of tim-22.

It localises to the mitochondrion inner membrane. In terms of biological role, mitochondrial intermembrane chaperone that participates in the import and insertion of some multi-pass transmembrane proteins into the mitochondrial inner membrane. Also required for the transfer of beta-barrel precursors from the TOM complex to the sorting and assembly machinery (SAM complex) of the outer membrane. Acts as a chaperone-like protein that protects the hydrophobic precursors from aggregation and guide them through the mitochondrial intermembrane space. The tim-8-tim-13 complex mediates the import of some proteins while the predominant tim-9/tin-9.1-tim-10/tin-10 70 kDa complex mediates the import of much more proteins. This is Mitochondrial import inner membrane translocase subunit tim-13 (tin-13) from Caenorhabditis elegans.